We begin with the raw amino-acid sequence, 169 residues long: Ribosome maturation factor RimM (169 aa).

In terms of domain architecture, PRC barrel spans 94-168 (DDEFYHADLI…RIVADPPEGL (75 aa)).

The protein belongs to the RimM family. In terms of assembly, binds ribosomal protein uS19.

It localises to the cytoplasm. In terms of biological role, an accessory protein needed during the final step in the assembly of 30S ribosomal subunit, possibly for assembly of the head region. Essential for efficient processing of 16S rRNA. May be needed both before and after RbfA during the maturation of 16S rRNA. It has affinity for free ribosomal 30S subunits but not for 70S ribosomes. This is Ribosome maturation factor RimM from Cereibacter sphaeroides (strain ATCC 17023 / DSM 158 / JCM 6121 / CCUG 31486 / LMG 2827 / NBRC 12203 / NCIMB 8253 / ATH 2.4.1.) (Rhodobacter sphaeroides).